The sequence spans 146 residues: Hemoglobin subunit beta-1/2 (146 aa).

Residue V1 is modified to N-acetylvaline. The 145-residue stretch at 2-146 (HLTPDEKNAV…VATALAHKYH (145 aa)) folds into the Globin domain. The residue at position 44 (S44) is a Phosphoserine. K59 is modified (N6-acetyllysine). Heme b is bound by residues H63 and H92. An S-nitrosocysteine modification is found at C93. K144 bears the N6-acetyllysine mark.

It belongs to the globin family. Heterotetramer of two alpha chains and two beta chains. In terms of tissue distribution, red blood cells.

Its function is as follows. Involved in oxygen transport from the lung to the various peripheral tissues. The chain is Hemoglobin subunit beta-1/2 (HBB) from Otolemur crassicaudatus (Brown greater galago).